We begin with the raw amino-acid sequence, 239 residues long: Pimeloyl-[acyl-carrier protein] methyl ester esterase (239 aa).

Residues Trp20, 77–78, and 138–142 each bind substrate; these read SM and FISLQ. The active-site Nucleophile is the Ser77. Catalysis depends on residues Asp192 and His220. His220 contacts substrate.

This sequence belongs to the AB hydrolase superfamily. Carboxylesterase BioH family. In terms of assembly, monomer.

It localises to the cytoplasm. The enzyme catalyses 6-carboxyhexanoyl-[ACP] methyl ester + H2O = 6-carboxyhexanoyl-[ACP] + methanol + H(+). It functions in the pathway cofactor biosynthesis; biotin biosynthesis. In terms of biological role, the physiological role of BioH is to remove the methyl group introduced by BioC when the pimeloyl moiety is complete. It allows to synthesize pimeloyl-ACP via the fatty acid synthetic pathway through the hydrolysis of the ester bonds of pimeloyl-ACP esters. This chain is Pimeloyl-[acyl-carrier protein] methyl ester esterase, found in Legionella pneumophila (strain Paris).